Consider the following 309-residue polypeptide: Tagatose-6-phosphate kinase (309 aa).

Belongs to the carbohydrate kinase PfkB family. LacC subfamily.

It carries out the reaction D-tagatofuranose 6-phosphate + ATP = D-tagatofuranose 1,6-bisphosphate + ADP + H(+). It participates in carbohydrate metabolism; D-tagatose 6-phosphate degradation; D-glyceraldehyde 3-phosphate and glycerone phosphate from D-tagatose 6-phosphate: step 1/2. This is Tagatose-6-phosphate kinase from Streptococcus pneumoniae serotype 4 (strain ATCC BAA-334 / TIGR4).